Consider the following 332-residue polypeptide: tRNA-dihydrouridine synthase B (332 aa).

FMN contacts are provided by residues 16–18 (PMA) and glutamine 70. The Proton donor role is filled by cysteine 100. FMN is bound by residues lysine 139, 200 to 202 (NGD), and 224 to 225 (GR).

Belongs to the Dus family. DusB subfamily. The cofactor is FMN.

The enzyme catalyses a 5,6-dihydrouridine in tRNA + NAD(+) = a uridine in tRNA + NADH + H(+). The catalysed reaction is a 5,6-dihydrouridine in tRNA + NADP(+) = a uridine in tRNA + NADPH + H(+). Catalyzes the synthesis of 5,6-dihydrouridine (D), a modified base found in the D-loop of most tRNAs, via the reduction of the C5-C6 double bond in target uridines. The sequence is that of tRNA-dihydrouridine synthase B from Pasteurella multocida (strain Pm70).